Consider the following 554-residue polypeptide: Arginine--tRNA ligase (554 aa).

The short motif at 129 to 139 is the 'HIGH' region element; it reads ANPTGPLHIGH.

This sequence belongs to the class-I aminoacyl-tRNA synthetase family. As to quaternary structure, monomer.

It localises to the cytoplasm. It carries out the reaction tRNA(Arg) + L-arginine + ATP = L-arginyl-tRNA(Arg) + AMP + diphosphate. This is Arginine--tRNA ligase from Syntrophotalea carbinolica (strain DSM 2380 / NBRC 103641 / GraBd1) (Pelobacter carbinolicus).